Reading from the N-terminus, the 377-residue chain is Chaperone protein DnaJ (377 aa).

Residues 5–70 (DYYEILGVAK…QKRAAYDQFG (66 aa)) enclose the J domain. The CR-type zinc-finger motif lies at 130–208 (GTEVKIRVPS…CHGQGRVEEH (79 aa)). 8 residues coordinate Zn(2+): Cys143, Cys146, Cys160, Cys163, Cys182, Cys185, Cys196, and Cys199. 4 CXXCXGXG motif repeats span residues 143–150 (CGECHGSG), 160–167 (CGTCGGVG), 182–189 (CPRCHGTG), and 196–203 (CKACHGQG).

This sequence belongs to the DnaJ family. In terms of assembly, homodimer. Requires Zn(2+) as cofactor.

The protein localises to the cytoplasm. Participates actively in the response to hyperosmotic and heat shock by preventing the aggregation of stress-denatured proteins and by disaggregating proteins, also in an autonomous, DnaK-independent fashion. Unfolded proteins bind initially to DnaJ; upon interaction with the DnaJ-bound protein, DnaK hydrolyzes its bound ATP, resulting in the formation of a stable complex. GrpE releases ADP from DnaK; ATP binding to DnaK triggers the release of the substrate protein, thus completing the reaction cycle. Several rounds of ATP-dependent interactions between DnaJ, DnaK and GrpE are required for fully efficient folding. Also involved, together with DnaK and GrpE, in the DNA replication of plasmids through activation of initiation proteins. In Thioalkalivibrio sulfidiphilus (strain HL-EbGR7), this protein is Chaperone protein DnaJ.